A 1576-amino-acid chain; its full sequence is MVDIGLSASGDSTRRKMEAFADCAVEVVPLDLYDSFRAKIAANLQWICAKAYGIDNVPEELKDPFYTDQYEQEHIKPPVIKLLLSSELYCRVCSLILKGDQVAALQGHQPVIQALSRKGIYIMESDDAPVSESDLSCCPIKMSAHMSMIDALMMAYTVEMISIEKVVASVKRFSTFSASKELPYDLEDAMVFWINKVNLKMREILEREQRIKQQVIESPSHPKVRYRRDHPSSRHLPYFPILEDLTKDISDGAALLAVIHFYCPEQMKLDDICLKEVTSMADSVYNIQLLKEFSNEYLNKCFYLTLEDMLYTPLVLKPNIMVFIAELFWWFENVKPEFVHPRDTQELKEAKIVMHPKTSRPQVPISNATKRSFLASPGSTTDSQATAASESCSSNYLQAEDAENGKGCAVFSPSHPLLPLRQKQQKSVKPEESLNHRDQANSLTRADGQPMASIIAWKEKKPRPLSQTFALHHAADDVESTSGDSISLARSISKDSLASNIVNPTPKHQSYPTPIKVLPKSLLGNVDIEDDEEELVAFIRSDDASCPGDLELQSVSSRASSQMSTSRLRRPADLESKPDSFFLEPLMPAVLKPAKEKHMVPKSEEYGEGKQKGFSSKRQNEGNQSFSRKKIINNHTGHDLNRTFTPLSSLESDPLRTDPVQLSIESGNGNFRPLATSSVESSEHGGGFFLHDLNADDDVEDKPSAGNLIMEDPHKPDTTWTVLRPGSENLDVGGCEEVAVSRPVGKYIGEEESVKLQEDLKLKEHDDKDDASGRSSPCLSTISQISSASMASGSMRMTSFAERKFQKLNSYETKSSTSSSQKTTPDGSECCPPPLTTWKQRREQSPGRQNRDHANVLASELVQLHMQLEEKRRVIEAQKKKMESLSARQRLKLGKAAFLHVVKKGKPETVAQPVKPEHGFRDYTKRTPEDIDTVSVNAKVEQYLESIDPGIVSSEVQEAFTDPKLKDPALLEADICNLMADANPEDIDSEIDVNECDLSIEKLNETISTLQQAIMKISQQQEMLMKAPSMAVPPLPSSSQDHKLKPSVQFVEPISPPGMPIVRKTTRFGQGRNARSLRVTEQKLAKEKMQSSSRVITPTNSIETVPHLKSVQPLKSPSVPTEESPVEVVPEQGSASQDKPTTGGFRLHNDNSQRTFVLSTSKDANIISEQMHREVISSSRVAGVSTSESSGKENVPVDERHKSSLIEVDLSDLKEPDEGEEESDHPEKTKDIISDDQKSGVGFFFKDEQKAEDELAKKRAAFLMKQQRKAEEARLRKRQLEAEVEQKRDDARRKAEEDRIRKDEEKARRELIKQEYLRRKQEQILEEQGLGRPKPKPKSKKTRPKSVHREESYSDSGTKYSSTPDNLSSAQSGSSLSLASGATTEAESVHSGGTPSHRVDCVDAPSGMGRHQSRNAERDWENASTASSIASVAEYSGPKLYKEPSSKSNKPLIHNAISHCCLAGKVNEAIKNSTLDELEKCDSNHYIILFRDAGCQFRALYSYYPETEEICKLTGTGPKNITKKMIDKLYKYSSDRKQFTVIPAKTMSASVDALTIHNHLWQAKRPALPKKNSLGK.

Positions 217 to 332 (ESPSHPKVRY…FIAELFWWFE (116 aa)) constitute a Calponin-homology (CH) domain. Disordered stretches follow at residues 415–447 (HPLL…TRAD), 549–572 (DLEL…RRPA), 595–653 (KEKH…LESD), and 811–852 (YETK…QNRD). The span at 428-439 (VKPEESLNHRDQ) shows a compositional bias: basic and acidic residues. Low complexity predominate over residues 554–566 (SVSSRASSQMSTS). Residues 595–611 (KEKHMVPKSEEYGEGKQ) are compositionally biased toward basic and acidic residues. Polar residues-rich tracts occupy residues 613–626 (GFSS…NQSF) and 642–651 (RTFTPLSSLE). Over residues 813–824 (TKSSTSSSQKTT) the composition is skewed to low complexity. Over residues 840–852 (QRREQSPGRQNRD) the composition is skewed to basic and acidic residues. 2 coiled-coil regions span residues 857–889 (LASE…SARQ) and 992–1022 (DVNE…QQQE). Disordered stretches follow at residues 1108–1149 (LKSV…RLHN), 1178–1236 (SSRV…ISDD), and 1274–1422 (RLRK…DWEN). The segment covering 1116-1131 (SPSVPTEESPVEVVPE) has biased composition (low complexity). Residues 1178–1189 (SSRVAGVSTSES) show a composition bias toward polar residues. Composition is skewed to basic and acidic residues over residues 1195–1204 (VPVDERHKSS), 1225–1236 (HPEKTKDIISDD), and 1274–1323 (RLRK…KQEQ). A coiled-coil region spans residues 1254 to 1315 (ELAKKRAAFL…KARRELIKQE (62 aa)). The segment covering 1333–1346 (PKPKPKSKKTRPKS) has biased composition (basic residues). Positions 1354-1366 (SDSGTKYSSTPDN) are enriched in polar residues. Residues 1367-1382 (LSSAQSGSSLSLASGA) are compositionally biased toward low complexity. Polar residues predominate over residues 1383-1394 (TTEAESVHSGGT). Positions 1437-1571 (GPKLYKEPSS…QAKRPALPKK (135 aa)) constitute a CKK domain.

It belongs to the CAMSAP1 family.

It is found in the cytoplasm. The protein localises to the cytoskeleton. Its function is as follows. Key microtubule-organizing protein that specifically binds the minus-end of non-centrosomal microtubules and regulates their dynamics and organization. Specifically recognizes growing microtubule minus-ends and stabilizes microtubules. Acts on free microtubule minus-ends that are not capped by microtubule-nucleating proteins or other factors and protects microtubule minus-ends from depolymerization. In contrast to camsap2 and camsap3, tracks along the growing tips of minus-end microtubules without significantly affecting the polymerization rate: binds at the very tip of the microtubules minus-end and acts as a minus-end tracking protein (-TIP) that dissociates from microtubules after allowing tubulin incorporation. Through interaction with spectrin may regulate neurite outgrowth. The protein is Calmodulin-regulated spectrin-associated protein 1 (camsap1) of Xenopus laevis (African clawed frog).